The following is a 59-amino-acid chain: UPF0291 protein CPR_1073 (59 aa).

Residues 1-30 form a disordered region; sequence MNIDELTKRINELHKKHKEEGLSEDEHKER.

The protein belongs to the UPF0291 family.

It localises to the cytoplasm. This Clostridium perfringens (strain SM101 / Type A) protein is UPF0291 protein CPR_1073.